The chain runs to 569 residues: Sulfite reductase [NADPH] hemoprotein beta-component (569 aa).

Residues C433, C439, C478, and C482 each contribute to the [4Fe-4S] cluster site. C482 contributes to the siroheme binding site.

It belongs to the nitrite and sulfite reductase 4Fe-4S domain family. In terms of assembly, alpha(8)-beta(8). The alpha component is a flavoprotein, the beta component is a hemoprotein. The cofactor is siroheme. [4Fe-4S] cluster serves as cofactor.

The catalysed reaction is hydrogen sulfide + 3 NADP(+) + 3 H2O = sulfite + 3 NADPH + 4 H(+). The protein operates within sulfur metabolism; hydrogen sulfide biosynthesis; hydrogen sulfide from sulfite (NADPH route): step 1/1. Functionally, component of the sulfite reductase complex that catalyzes the 6-electron reduction of sulfite to sulfide. This is one of several activities required for the biosynthesis of L-cysteine from sulfate. The protein is Sulfite reductase [NADPH] hemoprotein beta-component of Buchnera aphidicola subsp. Acyrthosiphon pisum (strain Tuc7).